The chain runs to 444 residues: L-cysteine:1D-myo-inositol 2-amino-2-deoxy-alpha-D-glucopyranoside ligase (444 aa).

Residue C66 coordinates Zn(2+). L-cysteinyl-5'-AMP contacts are provided by residues 66-69 (CGIT), T81, and 104-106 (NVT). Residues 68–78 (ITPYDATHLGH) carry the 'HIGH' region motif. Residues 206–211 (EHGGDP) carry the 'ERGGDP' region motif. W246 contacts L-cysteinyl-5'-AMP. Residue C250 participates in Zn(2+) binding. An L-cysteinyl-5'-AMP-binding site is contributed by 268 to 270 (GSD). H275 serves as a coordination point for Zn(2+). V302 is a binding site for L-cysteinyl-5'-AMP. Residues 308 to 312 (KMSKS) carry the 'KMSKS' region motif.

This sequence belongs to the class-I aminoacyl-tRNA synthetase family. MshC subfamily. As to quaternary structure, monomer. Zn(2+) serves as cofactor.

The enzyme catalyses 1D-myo-inositol 2-amino-2-deoxy-alpha-D-glucopyranoside + L-cysteine + ATP = 1D-myo-inositol 2-(L-cysteinylamino)-2-deoxy-alpha-D-glucopyranoside + AMP + diphosphate + H(+). In terms of biological role, catalyzes the ATP-dependent condensation of GlcN-Ins and L-cysteine to form L-Cys-GlcN-Ins. The polypeptide is L-cysteine:1D-myo-inositol 2-amino-2-deoxy-alpha-D-glucopyranoside ligase (Parafrankia sp. (strain EAN1pec)).